Here is a 308-residue protein sequence, read N- to C-terminus: Porphobilinogen deaminase (308 aa).

The residue at position 241 (C241) is an S-(dipyrrolylmethanemethyl)cysteine.

It belongs to the HMBS family. In terms of assembly, monomer. Dipyrromethane is required as a cofactor.

The enzyme catalyses 4 porphobilinogen + H2O = hydroxymethylbilane + 4 NH4(+). Its pathway is porphyrin-containing compound metabolism; protoporphyrin-IX biosynthesis; coproporphyrinogen-III from 5-aminolevulinate: step 2/4. In terms of biological role, tetrapolymerization of the monopyrrole PBG into the hydroxymethylbilane pre-uroporphyrinogen in several discrete steps. This chain is Porphobilinogen deaminase, found in Staphylococcus aureus (strain Newman).